The chain runs to 141 residues: Large ribosomal subunit protein uL11 (141 aa).

This sequence belongs to the universal ribosomal protein uL11 family. As to quaternary structure, part of the ribosomal stalk of the 50S ribosomal subunit. Interacts with L10 and the large rRNA to form the base of the stalk. L10 forms an elongated spine to which L12 dimers bind in a sequential fashion forming a multimeric L10(L12)X complex. Post-translationally, one or more lysine residues are methylated.

In terms of biological role, forms part of the ribosomal stalk which helps the ribosome interact with GTP-bound translation factors. This is Large ribosomal subunit protein uL11 from Synechococcus sp. (strain JA-2-3B'a(2-13)) (Cyanobacteria bacterium Yellowstone B-Prime).